Consider the following 57-residue polypeptide: Protein Ric1 (57 aa).

A run of 2 helical transmembrane segments spans residues 8 to 28 and 34 to 54; these read IPRL…QVGC and INCL…VYIL.

It belongs to the UPF0057 (PMP3) family.

It is found in the membrane. The protein is Protein Ric1 (RIC1) of Phytophthora infestans (Potato late blight agent).